Here is a 318-residue protein sequence, read N- to C-terminus: MTVITIAKRGLPKLTTSTSSTTTASSSSTITSVASSSSSLPLLSNSTSSSIIPSITPPSRNGNPYILDSGDMPNGTVFIVVGGIAGVIFLAILLWWVITTYSSHRLTRSVQDYESKMFSTQHTQFYGDSPYMDYPAKENFQDQVHISESDISPGNKDESVKDALVSHTNNEKPFLSNFERPLSSLVSESNRNSLFISPTGDILYKTRLSKLYQESPRLLQKPVIMTSDNVSTNSLVSTISSSSASSLDNGNEKEVGEDIRKPAKIASSPSRKLLNSPESDGSVNRNHSKGNLLVVQSKRKPTPSTYLEHMLEGKEQDE.

A helical membrane pass occupies residues 78 to 98 (FIVVGGIAGVIFLAILLWWVI). S129 carries the post-translational modification Phosphoserine. The segment covering 238–247 (TISSSSASSL) has biased composition (low complexity). The segment at 238 to 318 (TISSSSASSL…HMLEGKEQDE (81 aa)) is disordered. Over residues 250–261 (GNEKEVGEDIRK) the composition is skewed to basic and acidic residues. Residues 276-285 (SPESDGSVNR) show a composition bias toward polar residues. A phosphoserine mark is found at S279, S282, and S288. Positions 309-318 (HMLEGKEQDE) are enriched in basic and acidic residues. Residue K314 forms a Glycyl lysine isopeptide (Lys-Gly) (interchain with G-Cter in ubiquitin) linkage.

Belongs to the PRM5 family.

Its subcellular location is the membrane. This Saccharomyces cerevisiae (strain RM11-1a) (Baker's yeast) protein is Pheromone-regulated membrane protein 5 (PRM5).